The chain runs to 626 residues: Hemocyanin AA6 chain (626 aa).

Cu cation-binding residues include His-170, His-174, His-201, His-321, His-325, and His-361. Residue Ser-374 is modified to Phosphoserine.

Belongs to the tyrosinase family. Hemocyanin subfamily. In terms of assembly, scorpion hemocyanin is a 24-chain polymer with 8 different chains identified, assembled in hexameric substructures. In terms of processing, three disulfide bonds are present. In terms of tissue distribution, hemolymph.

Its subcellular location is the secreted. It localises to the extracellular space. Its function is as follows. Hemocyanins are copper-containing oxygen carriers occurring freely dissolved in the hemolymph of many mollusks and arthropods. The sequence is that of Hemocyanin AA6 chain from Androctonus australis (Sahara scorpion).